A 158-amino-acid polypeptide reads, in one-letter code: Transcription elongation factor GreA (158 aa).

Positions 10 to 76 (TLEGKKKLEE…QIEKMIRNAE (67 aa)) form a coiled coil.

Belongs to the GreA/GreB family.

Functionally, necessary for efficient RNA polymerase transcription elongation past template-encoded arresting sites. The arresting sites in DNA have the property of trapping a certain fraction of elongating RNA polymerases that pass through, resulting in locked ternary complexes. Cleavage of the nascent transcript by cleavage factors such as GreA or GreB allows the resumption of elongation from the new 3'terminus. GreA releases sequences of 2 to 3 nucleotides. The chain is Transcription elongation factor GreA from Halalkalibacterium halodurans (strain ATCC BAA-125 / DSM 18197 / FERM 7344 / JCM 9153 / C-125) (Bacillus halodurans).